Reading from the N-terminus, the 397-residue chain is Odorant receptor 59a (397 aa).

The Cytoplasmic portion of the chain corresponds to 1–36 (MAEVRVDSLEFFKSHWTAWRYLGVAHFRVENWKNLY). A helical transmembrane segment spans residues 37–57 (VFYSIVSNLLVTLCYPVHLGI). Residues 58–68 (SLFRNRTITED) are Extracellular-facing. N-linked (GlcNAc...) asparagine glycosylation occurs at N62. A helical membrane pass occupies residues 69 to 92 (ILNLTTFATCTACSVKCLLYAYNI). Residues 93–128 (KDVLEMERLLRLLDERVVGPEQRSIYGQVRVQLRNV) lie on the Cytoplasmic side of the membrane. Residues 129 to 149 (LYVFIGIYMPCALFAELSFLF) traverse the membrane as a helical segment. At 150–179 (KEERGLMYPAWFPFDWLHSTRNYYIANAYQ) the chain is on the extracellular side. The helical transmembrane segment at 180 to 200 (IVGISFQLLQNYVSDCFPAVV) threads the bilayer. The Cytoplasmic segment spans residues 201 to 274 (LCLISSHIKM…IEAFISLPML (74 aa)). A helical transmembrane segment spans residues 275-295 (IQFTVTALNVCIGLAALVFFV). Topologically, residues 296-301 (SEPMAR) are extracellular. Residues 302–322 (MYFIFYSLAMPLQIFPSCFFG) traverse the membrane as a helical segment. Residues 323–372 (TDNEYWFGRLHYAAFSCNWHTQNRSFKRKMMLFVEQSLKKSTAVAGGMMR) are Cytoplasmic-facing. The chain crosses the membrane as a helical span at residues 373 to 393 (IHLDTFFSTLKGAYSLFTIII). Residues 394 to 397 (RMRK) lie on the Extracellular side of the membrane.

It belongs to the insect chemoreceptor superfamily. Heteromeric odorant receptor channel (TC 1.A.69) family. Or2a subfamily. In terms of assembly, interacts with Orco. Complexes exist early in the endomembrane system in olfactory sensory neurons (OSNs), coupling these complexes to the conserved ciliary trafficking pathway. Expressed in neurons of the third antennal segment.

The protein localises to the cell membrane. In terms of biological role, odorant receptor which mediates acceptance or avoidance behavior, depending on its substrates. The odorant receptor repertoire encodes a large collection of odor stimuli that vary widely in identity, intensity, and duration. May form a complex with Orco to form odorant-sensing units, providing sensitive and prolonged odorant signaling and calcium permeability. Involved in the behavioral responses to ethyl acetate, anisole, hexanoic acid, and pyrazines. The protein is Odorant receptor 59a (Or59a) of Drosophila melanogaster (Fruit fly).